The sequence spans 292 residues: GTP cyclohydrolase FolE2 (292 aa).

Belongs to the GTP cyclohydrolase IV family.

The enzyme catalyses GTP + H2O = 7,8-dihydroneopterin 3'-triphosphate + formate + H(+). It functions in the pathway cofactor biosynthesis; 7,8-dihydroneopterin triphosphate biosynthesis; 7,8-dihydroneopterin triphosphate from GTP: step 1/1. Functionally, converts GTP to 7,8-dihydroneopterin triphosphate. This Staphylococcus saprophyticus subsp. saprophyticus (strain ATCC 15305 / DSM 20229 / NCIMB 8711 / NCTC 7292 / S-41) protein is GTP cyclohydrolase FolE2.